Consider the following 954-residue polypeptide: Glycine dehydrogenase (decarboxylating) (954 aa).

Position 704 is an N6-(pyridoxal phosphate)lysine (Lys-704).

The protein belongs to the GcvP family. The glycine cleavage system is composed of four proteins: P, T, L and H. Pyridoxal 5'-phosphate serves as cofactor.

The enzyme catalyses N(6)-[(R)-lipoyl]-L-lysyl-[glycine-cleavage complex H protein] + glycine + H(+) = N(6)-[(R)-S(8)-aminomethyldihydrolipoyl]-L-lysyl-[glycine-cleavage complex H protein] + CO2. The glycine cleavage system catalyzes the degradation of glycine. The P protein binds the alpha-amino group of glycine through its pyridoxal phosphate cofactor; CO(2) is released and the remaining methylamine moiety is then transferred to the lipoamide cofactor of the H protein. The chain is Glycine dehydrogenase (decarboxylating) from Rhizobium etli (strain CIAT 652).